A 242-amino-acid chain; its full sequence is MEGWQRAFVLHSRPWSETSLMLDVFTEESGRVRLVAKGARSKRSNLKGVLQPFTPLLLRYSGRGEVKTLRSAEAVSLALPLSGITLYSGLYINELLSRVLEYETRFSELFFDYLNCIQALAGTTGSPEPALRRFELALLGHLGYGVNFTHCAGSGERVDDTMTYRYREEKGFFASVVIDNNTFTGRHLKALEEREFPDVDTLRAAKRFTRMALKPYLGGKPLKSRELFRQFMPKRTVKMKKD.

It belongs to the RecO family. As to quaternary structure, monomer.

Involved in DNA repair and RecF pathway recombination. This chain is DNA repair protein RecO, found in Salmonella dublin (strain CT_02021853).